A 172-amino-acid polypeptide reads, in one-letter code: MEYFNVGKIVNTQGLQGEMRVLSVSDFAEERFKKGSQLALFDDKDQFVQEVTIVSHRKQKNFDIIKFKDMYHINAIEKYKGYTLKVSKANQGDLQEGEFYYHQIIGMPVYEKDRLIGYVKEILQPGANDVWVVKRQGKRDLLLPYIPPVVLNVDVPNKCVDVELMEGLDDED.

The region spanning 95–168 is the PRC barrel domain; it reads QEGEFYYHQI…CVDVELMEGL (74 aa).

This sequence belongs to the RimM family. In terms of assembly, binds ribosomal protein uS19.

It is found in the cytoplasm. Its function is as follows. An accessory protein needed during the final step in the assembly of 30S ribosomal subunit, possibly for assembly of the head region. Essential for efficient processing of 16S rRNA. May be needed both before and after RbfA during the maturation of 16S rRNA. It has affinity for free ribosomal 30S subunits but not for 70S ribosomes. This is Ribosome maturation factor RimM from Streptococcus pyogenes serotype M49 (strain NZ131).